Consider the following 397-residue polypeptide: MGIKHCCYILYFTLALVTLVQAGRLGEEVDILPSPNDTRRSLQGCEAHNIIDKCWRCKPDWAENRQALGNCAQGFGKATHGGKWGDIYMVTSDQDDDVVNPKEGTLRFGATQDRPLWIIFQRDMIIYLQQEMVVTSDKTIDGRGAKVELVYGGITLMNVKNVIIHNIDIHDVRVLPGGRIKSNGGPAIPRHQSDGDAIHVTGSSDIWIDHCTLSKSFDGLVDVNWGSTGVTISNCKFTHHEKAVLLGASDTHFQDLKMHVTLAYNIFTNTVHERMPRCRFGFFQIVNNFYDRWDKYAIGGSSNPTILSQGNKFVAPDFIYKKNVCLRTGAQEPEWMTWNWRTQNDVLENGAIFVASGSDPVLTAEQNAGMMQAEPGDMVPQLTMNAGVLTCSPGAPC.

The N-terminal stretch at 1–25 (MGIKHCCYILYFTLALVTLVQAGRL) is a signal peptide. An N-linked (GlcNAc...) asparagine glycan is attached at asparagine 36. Cysteine 54 and cysteine 71 are oxidised to a cystine. PbH1 repeat units follow at residues 159–202 (VKNV…HVTG), 203–224 (SSDI…VDVN), and 227–248 (STGV…LLGA). Positions 194, 218, and 222 each coordinate Ca(2+). Arginine 274 is a catalytic residue.

It belongs to the polysaccharide lyase 1 family. Amb a subfamily. Monomer. Requires Ca(2+) as cofactor. The N-terminus is blocked. As to expression, pollen and flowers.

It carries out the reaction Eliminative cleavage of (1-&gt;4)-alpha-D-galacturonan to give oligosaccharides with 4-deoxy-alpha-D-galact-4-enuronosyl groups at their non-reducing ends.. Its pathway is glycan metabolism; pectin degradation; 2-dehydro-3-deoxy-D-gluconate from pectin: step 2/5. In terms of biological role, has pectate lyase activity. The chain is Pectate lyase 4 from Ambrosia artemisiifolia (Common ragweed).